Reading from the N-terminus, the 395-residue chain is Acetate kinase (395 aa).

N10 contacts Mg(2+). K17 lines the ATP pocket. Position 87 (R87) interacts with substrate. Residue D144 is the Proton donor/acceptor of the active site. Residues 204–208 (HLGNG), 279–281 (DMR), and 327–331 (GIGEN) contribute to the ATP site. E381 serves as a coordination point for Mg(2+).

This sequence belongs to the acetokinase family. Homodimer. Requires Mg(2+) as cofactor. Mn(2+) is required as a cofactor.

It localises to the cytoplasm. The catalysed reaction is acetate + ATP = acetyl phosphate + ADP. It functions in the pathway metabolic intermediate biosynthesis; acetyl-CoA biosynthesis; acetyl-CoA from acetate: step 1/2. Catalyzes the formation of acetyl phosphate from acetate and ATP. Can also catalyze the reverse reaction. In Stutzerimonas stutzeri (strain A1501) (Pseudomonas stutzeri), this protein is Acetate kinase.